A 383-amino-acid polypeptide reads, in one-letter code: Cell division protein FtsZ (383 aa).

Residues Gly20 to Asn24, Gly107 to Gly109, Glu138, Arg142, and Asn186 contribute to the GTP site.

Belongs to the FtsZ family. In terms of assembly, homodimer. Polymerizes to form a dynamic ring structure in a strictly GTP-dependent manner. Interacts directly with several other division proteins.

The protein localises to the cytoplasm. Its function is as follows. Essential cell division protein that forms a contractile ring structure (Z ring) at the future cell division site. The regulation of the ring assembly controls the timing and the location of cell division. One of the functions of the FtsZ ring is to recruit other cell division proteins to the septum to produce a new cell wall between the dividing cells. Binds GTP and shows GTPase activity. The chain is Cell division protein FtsZ from Shigella flexneri.